A 370-amino-acid polypeptide reads, in one-letter code: ATP/GTP phosphatase (370 aa).

The enzyme catalyses ATP + H2O = ADP + phosphate + H(+). It carries out the reaction GTP + H2O = GDP + phosphate + H(+). In terms of biological role, has nucleotide phosphatase activity toward ATP and GTP, but not toward CTP, TTP and ADP. The polypeptide is ATP/GTP phosphatase (Helicobacter pylori (strain ATCC 700392 / 26695) (Campylobacter pylori)).